The following is a 188-amino-acid chain: Peptidyl-tRNA hydrolase (188 aa).

Position 14 (F14) interacts with tRNA. Catalysis depends on H19, which acts as the Proton acceptor. TRNA is bound by residues Y64, N66, and N112.

The protein belongs to the PTH family. Monomer.

Its subcellular location is the cytoplasm. The enzyme catalyses an N-acyl-L-alpha-aminoacyl-tRNA + H2O = an N-acyl-L-amino acid + a tRNA + H(+). Its function is as follows. Hydrolyzes ribosome-free peptidyl-tRNAs (with 1 or more amino acids incorporated), which drop off the ribosome during protein synthesis, or as a result of ribosome stalling. Catalyzes the release of premature peptidyl moieties from peptidyl-tRNA molecules trapped in stalled 50S ribosomal subunits, and thus maintains levels of free tRNAs and 50S ribosomes. The protein is Peptidyl-tRNA hydrolase of Onion yellows phytoplasma (strain OY-M).